The primary structure comprises 222 residues: Thiamine-phosphate synthase (222 aa).

Residues 44–48 (QFREK) and Asn-79 contribute to the 4-amino-2-methyl-5-(diphosphooxymethyl)pyrimidine site. Residues Asp-80 and Asp-99 each coordinate Mg(2+). Residue Ser-117 coordinates 4-amino-2-methyl-5-(diphosphooxymethyl)pyrimidine. A 2-[(2R,5Z)-2-carboxy-4-methylthiazol-5(2H)-ylidene]ethyl phosphate-binding site is contributed by 143–145 (TET). Lys-146 is a binding site for 4-amino-2-methyl-5-(diphosphooxymethyl)pyrimidine. 2-[(2R,5Z)-2-carboxy-4-methylthiazol-5(2H)-ylidene]ethyl phosphate is bound by residues Gly-175 and 195–196 (IS).

Belongs to the thiamine-phosphate synthase family. Monomer. Requires Mg(2+) as cofactor.

It catalyses the reaction 2-[(2R,5Z)-2-carboxy-4-methylthiazol-5(2H)-ylidene]ethyl phosphate + 4-amino-2-methyl-5-(diphosphooxymethyl)pyrimidine + 2 H(+) = thiamine phosphate + CO2 + diphosphate. It carries out the reaction 2-(2-carboxy-4-methylthiazol-5-yl)ethyl phosphate + 4-amino-2-methyl-5-(diphosphooxymethyl)pyrimidine + 2 H(+) = thiamine phosphate + CO2 + diphosphate. The catalysed reaction is 4-methyl-5-(2-phosphooxyethyl)-thiazole + 4-amino-2-methyl-5-(diphosphooxymethyl)pyrimidine + H(+) = thiamine phosphate + diphosphate. It functions in the pathway cofactor biosynthesis; thiamine diphosphate biosynthesis; thiamine phosphate from 4-amino-2-methyl-5-diphosphomethylpyrimidine and 4-methyl-5-(2-phosphoethyl)-thiazole: step 1/1. Functionally, condenses 4-methyl-5-(beta-hydroxyethyl)thiazole monophosphate (THZ-P) and 2-methyl-4-amino-5-hydroxymethyl pyrimidine pyrophosphate (HMP-PP) to form thiamine monophosphate (TMP). Is also able to use the 2-methoxy analog MeO-HMP-PP, as substrate in vitro, but not the 2-trifluoromethyl analog CF(3)-HMP-PP. The sequence is that of Thiamine-phosphate synthase (thiE) from Bacillus subtilis (strain 168).